Reading from the N-terminus, the 126-residue chain is uncharacterized protein (126 aa).

A disordered region spans residues 1–101 (MQASSEPANV…KSVGSQSADE (101 aa)). 2 stretches are compositionally biased toward polar residues: residues 14 to 27 (GQNQ…STSP) and 86 to 99 (DTEA…SQSA).

This is an uncharacterized protein from Schizosaccharomyces pombe (strain 972 / ATCC 24843) (Fission yeast).